The sequence spans 436 residues: Trigger factor (436 aa).

Residues 161–246 (GMRVTMDFVG…LNKVEEQILP (86 aa)) enclose the PPIase FKBP-type domain.

This sequence belongs to the FKBP-type PPIase family. Tig subfamily.

It localises to the cytoplasm. It carries out the reaction [protein]-peptidylproline (omega=180) = [protein]-peptidylproline (omega=0). Its function is as follows. Involved in protein export. Acts as a chaperone by maintaining the newly synthesized protein in an open conformation. Functions as a peptidyl-prolyl cis-trans isomerase. The sequence is that of Trigger factor from Aeromonas hydrophila subsp. hydrophila (strain ATCC 7966 / DSM 30187 / BCRC 13018 / CCUG 14551 / JCM 1027 / KCTC 2358 / NCIMB 9240 / NCTC 8049).